Here is a 120-residue protein sequence, read N- to C-terminus: NAD(P)H-quinone oxidoreductase subunit 3 (120 aa).

A run of 3 helical transmembrane segments spans residues 6-26 (GYDAFLGFLLIAAAVPALALI), 64-84 (MFALVFVIFDVETVFLYPWAV), and 89-109 (LGVLAFIEALIFITILLVALA).

It belongs to the complex I subunit 3 family. NDH-1 can be composed of about 15 different subunits; different subcomplexes with different compositions have been identified which probably have different functions.

It is found in the cellular thylakoid membrane. It catalyses the reaction a plastoquinone + NADH + (n+1) H(+)(in) = a plastoquinol + NAD(+) + n H(+)(out). The enzyme catalyses a plastoquinone + NADPH + (n+1) H(+)(in) = a plastoquinol + NADP(+) + n H(+)(out). In terms of biological role, NDH-1 shuttles electrons from an unknown electron donor, via FMN and iron-sulfur (Fe-S) centers, to quinones in the respiratory and/or the photosynthetic chain. The immediate electron acceptor for the enzyme in this species is believed to be plastoquinone. Couples the redox reaction to proton translocation, and thus conserves the redox energy in a proton gradient. Cyanobacterial NDH-1 also plays a role in inorganic carbon-concentration. This is NAD(P)H-quinone oxidoreductase subunit 3 from Parasynechococcus marenigrum (strain WH8102).